Here is a 603-residue protein sequence, read N- to C-terminus: MRLSQQLFVTLREDPAEAEIPSHKCLVRAGYIRRIGSGIYAYLPLMWRVLQKVSQIVREEMNKAGAQECLLPQLQPAELWQESGRWDTYTKAEGIMFALTDRQNRELGLGPTHEEVITAVARDLIRSYRQLPVNLYQIQTKFRDEIRPRFGLMRGREFIMKDAYSFNLDEECLKKTYQAMDIAYRNIFRRCGLAFRAVEADSGAIGGSASQEFMVLADAGEDEVLFTADEKYAANVEKAVSLPADKVASPFKKFAKKETPNTNTIESLAKFLDCAATAIVKNVLYEVVYDSGITVLVLVSIRGDQEVNEVKLQNELVRQASRYNAKTILALKIPDAAAQQKWATKPLPLGYIGPDLEDNLLKKASDIAPQFLRIADNTVTDLENLITGANETGFHLVGANWGKDFILPELIVDLRKAQVGDRAIHDPNQTLQSARGIEVGHIFQLGYKYSQAMNAFYTNEAGESTPICMGCYGIGVSRLAQAAVEQSYDKDGIIWPVAIAPYQAIVVIPNLADAEQVKTAESLYNELNQAGIETLLDDRDERAGVKFKDADLIGIPYRIVTGKSLKSGKVELVERASKKASEVAINEVVSYLKTAISKVNASD.

It belongs to the class-II aminoacyl-tRNA synthetase family. ProS type 1 subfamily. As to quaternary structure, homodimer.

Its subcellular location is the cytoplasm. The catalysed reaction is tRNA(Pro) + L-proline + ATP = L-prolyl-tRNA(Pro) + AMP + diphosphate. In terms of biological role, catalyzes the attachment of proline to tRNA(Pro) in a two-step reaction: proline is first activated by ATP to form Pro-AMP and then transferred to the acceptor end of tRNA(Pro). As ProRS can inadvertently accommodate and process non-cognate amino acids such as alanine and cysteine, to avoid such errors it has two additional distinct editing activities against alanine. One activity is designated as 'pretransfer' editing and involves the tRNA(Pro)-independent hydrolysis of activated Ala-AMP. The other activity is designated 'posttransfer' editing and involves deacylation of mischarged Ala-tRNA(Pro). The misacylated Cys-tRNA(Pro) is not edited by ProRS. In Microcystis aeruginosa (strain NIES-843 / IAM M-2473), this protein is Proline--tRNA ligase.